The following is a 490-amino-acid chain: Ribulose bisphosphate carboxylase large chain (490 aa).

Residues N127 and T177 each coordinate substrate. The active-site Proton acceptor is the K179. K181 contributes to the substrate binding site. Mg(2+) contacts are provided by K205, D207, and E208. K205 is subject to N6-carboxylysine. H297 (proton acceptor) is an active-site residue. Residues R298, H330, and S382 each contribute to the substrate site.

This sequence belongs to the RuBisCO large chain family. Type I subfamily. Heterohexadecamer of 8 large chains and 8 small chains. Mg(2+) is required as a cofactor.

It localises to the plastid. It is found in the chloroplast. It carries out the reaction 2 (2R)-3-phosphoglycerate + 2 H(+) = D-ribulose 1,5-bisphosphate + CO2 + H2O. It catalyses the reaction D-ribulose 1,5-bisphosphate + O2 = 2-phosphoglycolate + (2R)-3-phosphoglycerate + 2 H(+). In terms of biological role, ruBisCO catalyzes two reactions: the carboxylation of D-ribulose 1,5-bisphosphate, the primary event in carbon dioxide fixation, as well as the oxidative fragmentation of the pentose substrate in the photorespiration process. Both reactions occur simultaneously and in competition at the same active site. The sequence is that of Ribulose bisphosphate carboxylase large chain from Trieres chinensis (Marine centric diatom).